The following is a 511-amino-acid chain: Phospho-2-dehydro-3-deoxyheptonate aldolase 1, chloroplastic (511 aa).

A chloroplast-targeting transit peptide spans 1-49 (MALSNTLSLSSSKSLVQSHLLHNPTPQPRFSLFPTTQHGRRHPISAVHA).

The protein belongs to the class-II DAHP synthase family. Higher levels seen in the cotyledons than in the leaves and flowers. Lower levels seen in the roots and stems.

The protein localises to the plastid. Its subcellular location is the chloroplast. The enzyme catalyses D-erythrose 4-phosphate + phosphoenolpyruvate + H2O = 7-phospho-2-dehydro-3-deoxy-D-arabino-heptonate + phosphate. Its pathway is metabolic intermediate biosynthesis; chorismate biosynthesis; chorismate from D-erythrose 4-phosphate and phosphoenolpyruvate: step 1/7. In terms of biological role, may be involved in the synthesis of secondary metabolites derived from intermediates of the pre-chorismate pathway up to shikimate. This chain is Phospho-2-dehydro-3-deoxyheptonate aldolase 1, chloroplastic, found in Solanum lycopersicum (Tomato).